The chain runs to 317 residues: Hairy/enhancer-of-split related with YRPW motif protein 1 (317 aa).

The disordered stretch occupies residues 1-59 (MKRNHDFSSSDSELDENIEVEKESADENAGANSPLGSMSPSTTSQVQARKRRRGIIEKR). Residues 30–47 (GANSPLGSMSPSTTSQVQ) are compositionally biased toward polar residues. In terms of domain architecture, bHLH spans 48-103 (ARKRRRGIIEKRRRDRINNSLSELRRLVPSAFEKQGSAKLEKAEILQMTVDHLKML). In terms of domain architecture, Orange spans 121-157 (YRGLGFRECLAETARYLSIIEGLDNTDPLRIRLVSHL). Composition is skewed to low complexity over residues 193 to 226 (QQQQ…SAPS) and 248 to 264 (PPST…TASK). The tract at residues 193–264 (QQQQQQGAPL…PGLTPPTASK (72 aa)) is disordered. The YRPW motif signature appears at 307-310 (YRPW).

It belongs to the HEY family.

Its subcellular location is the nucleus. In terms of biological role, transcriptional repressor which functions as a downstream effector of Notch signaling. The sequence is that of Hairy/enhancer-of-split related with YRPW motif protein 1 (hey1) from Danio rerio (Zebrafish).